Reading from the N-terminus, the 349-residue chain is Phenylalanine--tRNA ligase alpha subunit (349 aa).

Residue Glu-258 coordinates Mg(2+).

It belongs to the class-II aminoacyl-tRNA synthetase family. Phe-tRNA synthetase alpha subunit type 1 subfamily. In terms of assembly, tetramer of two alpha and two beta subunits. Requires Mg(2+) as cofactor.

The protein resides in the cytoplasm. The catalysed reaction is tRNA(Phe) + L-phenylalanine + ATP = L-phenylalanyl-tRNA(Phe) + AMP + diphosphate + H(+). The sequence is that of Phenylalanine--tRNA ligase alpha subunit from Rickettsia conorii (strain ATCC VR-613 / Malish 7).